The chain runs to 88 residues: UPF0223 protein OB1419 (88 aa).

Belongs to the UPF0223 family.

The chain is UPF0223 protein OB1419 from Oceanobacillus iheyensis (strain DSM 14371 / CIP 107618 / JCM 11309 / KCTC 3954 / HTE831).